We begin with the raw amino-acid sequence, 94 residues long: Large ribosomal subunit protein uL23 (94 aa).

This sequence belongs to the universal ribosomal protein uL23 family. Part of the 50S ribosomal subunit. Contacts protein L29, and trigger factor when it is bound to the ribosome.

Its function is as follows. One of the early assembly proteins it binds 23S rRNA. One of the proteins that surrounds the polypeptide exit tunnel on the outside of the ribosome. Forms the main docking site for trigger factor binding to the ribosome. This is Large ribosomal subunit protein uL23 from Geobacter sp. (strain M21).